The chain runs to 212 residues: Uridine kinase (212 aa).

Residue 13–20 (GASASGKS) coordinates ATP.

It belongs to the uridine kinase family.

The protein resides in the cytoplasm. It carries out the reaction uridine + ATP = UMP + ADP + H(+). It catalyses the reaction cytidine + ATP = CMP + ADP + H(+). It participates in pyrimidine metabolism; CTP biosynthesis via salvage pathway; CTP from cytidine: step 1/3. The protein operates within pyrimidine metabolism; UMP biosynthesis via salvage pathway; UMP from uridine: step 1/1. The sequence is that of Uridine kinase from Shewanella piezotolerans (strain WP3 / JCM 13877).